The sequence spans 95 residues: Osteocalcin (95 aa).

The first 23 residues, 1-23 (MRTIFLLTLLTLAALCLSDLTDA), serve as a signal peptide directing secretion. The propeptide occupies 24–49 (KPSGPESDKAFMSKQEGNKVVNRLRR). The 47-residue stretch at 46–92 (RLRRYLGASVPSPDPLEPTREQCELNPACDELSDQYGLKTAYKRIYG) folds into the Gla domain. 4 residues coordinate Ca(2+): Glu62, Glu66, Glu69, and Asp75. Glu62, Glu66, and Glu69 each carry 4-carboxyglutamate. Cys68 and Cys74 are disulfide-bonded.

The protein belongs to the osteocalcin/matrix Gla protein family. Post-translationally, gamma-carboxyglutamate residues are formed by vitamin K dependent carboxylation by GGCX. These residues are essential for the binding of calcium. Carboxylated in a Ptprv/Esp-dependent process. Decarboxylation promotes the hormone activity. As to expression, bone.

It is found in the secreted. In terms of biological role, the carboxylated form is one of the main organic components of the bone matrix, which constitutes 1-2% of the total bone protein: it acts as a negative regulator of bone formation and is required to limit bone formation without impairing bone resorption or mineralization. The carboxylated form binds strongly to apatite and calcium. Its function is as follows. The uncarboxylated form acts as a hormone secreted by osteoblasts, which regulates different cellular processes, such as energy metabolism, male fertility and brain development. Regulates of energy metabolism by acting as a hormone favoring pancreatic beta-cell proliferation, insulin secretion and sensitivity and energy expenditure. Uncarboxylated osteocalcin hormone also promotes testosterone production in the testes: acts as a ligand for G protein-coupled receptor GPRC6A at the surface of Leydig cells, initiating a signaling response that promotes the expression of enzymes required for testosterone synthesis in a CREB-dependent manner. Also acts as a regulator of brain development: osteocalcin hormone crosses the blood-brain barrier and acts as a ligand for GPR158 on neurons, initiating a signaling response that prevents neuronal apoptosis in the hippocampus, favors the synthesis of all monoamine neurotransmitters and inhibits that of gamma-aminobutyric acid (GABA). Osteocalcin also crosses the placenta during pregnancy and maternal osteocalcin is required for fetal brain development. The polypeptide is Osteocalcin (Mus musculus (Mouse)).